A 410-amino-acid chain; its full sequence is Argininosuccinate synthase (410 aa).

10–18 (AYSGGLDTS) is an ATP binding site. Tyr-88 and Ser-93 together coordinate L-citrulline. An ATP-binding site is contributed by Gly-118. 3 residues coordinate L-aspartate: Thr-120, Asn-124, and Asp-125. Asn-124 contributes to the L-citrulline binding site. Residues Arg-128, Ser-177, Ser-186, Glu-262, and Tyr-274 each contribute to the L-citrulline site.

The protein belongs to the argininosuccinate synthase family. Type 1 subfamily. As to quaternary structure, homotetramer.

It is found in the cytoplasm. The enzyme catalyses L-citrulline + L-aspartate + ATP = 2-(N(omega)-L-arginino)succinate + AMP + diphosphate + H(+). It participates in amino-acid biosynthesis; L-arginine biosynthesis; L-arginine from L-ornithine and carbamoyl phosphate: step 2/3. The polypeptide is Argininosuccinate synthase (Caldanaerobacter subterraneus subsp. tengcongensis (strain DSM 15242 / JCM 11007 / NBRC 100824 / MB4) (Thermoanaerobacter tengcongensis)).